A 444-amino-acid polypeptide reads, in one-letter code: Enolase (444 aa).

H163 and E172 together coordinate substrate. E215 functions as the Proton donor in the catalytic mechanism. The Mg(2+) site is built by D250, E300, and D327. Substrate-binding residues include E300 and D327. The active-site Proton acceptor is K352. Residues 379 to 382 and K403 each bind substrate; that span reads SHRS.

It belongs to the enolase family. In terms of assembly, homodimer. Mg(2+) serves as cofactor.

Its subcellular location is the cytoplasm. The enzyme catalyses (2R)-2-phosphoglycerate = phosphoenolpyruvate + H2O. It functions in the pathway carbohydrate degradation; glycolysis; pyruvate from D-glyceraldehyde 3-phosphate: step 4/5. The chain is Enolase (PGH1) from Mesembryanthemum crystallinum (Common ice plant).